The sequence spans 328 residues: Basic leucine zipper (bZIP) transcription factor atfB (328 aa).

Residues 1–39 are disordered; sequence MLPEQSAFGRSAMPGSDAVNPGPSPFAPPPNSFSGDFLG. The segment covering 22-31 has biased composition (pro residues); the sequence is GPSPFAPPPN. The segment at 163–202 is basic motif; sequence KAKREKFLERNRLAASKCRQKKKEHTQLLESRYREQSDKK. The 64-residue stretch at 163 to 226 folds into the bZIP domain; sequence KAKREKFLER…LGLKNEVLKH (64 aa). The segment at 205–219 is leucine-zipper; the sequence is LVSEIARLRSEILGL. A disordered region spans residues 250-313; sequence TTAPDLTDVP…SEASVLTENS (64 aa). Polar residues predominate over residues 262 to 277; that stretch reads ASSSEGPMTPRPQQAL. The span at 283–305 shows a compositional bias: basic and acidic residues; it reads DPLHLEPSRADGSTDHSVRRDSE.

The protein belongs to the bZIP family. ATF subfamily.

It is found in the nucleus. Its function is as follows. Transcription factor that acts as a key player in the regulatory circuit that integrates secondary metabolism and cellular response to oxidative stress. Regulates the genes involved in development, as well as osmotic, oxidative, and cell wall stresses. Participates in the caspofungin paradoxical effect (CPE), where fungi grow beyond the minimum inhibitory concentration of caspofungin. Plays a role in virulence. In Aspergillus fumigatus (strain ATCC MYA-4609 / CBS 101355 / FGSC A1100 / Af293) (Neosartorya fumigata), this protein is Basic leucine zipper (bZIP) transcription factor atfB.